Reading from the N-terminus, the 951-residue chain is Translation initiation factor IF-2 (951 aa).

Disordered stretches follow at residues 58 to 255 (AERK…AVVI) and 305 to 329 (DVSR…KSLS). Low complexity predominate over residues 101-170 (AEPQYAEPQQ…PQAQPAQPAA (70 aa)). Pro residues predominate over residues 171–216 (PVAPPAPSAQPSAPQPPAAQPRPPQPPMPSRPPPAGYRPAPPPGAR). A compositionally biased stretch (low complexity) spans 217-234 (PPMSAAPGAPAQPGAAGQ). The region spanning 450 to 619 (IRPPVVTVMG…ALQSEVLELK (170 aa)) is the tr-type G domain. The tract at residues 459–466 (GHVDHGKT) is G1. 459–466 (GHVDHGKT) serves as a coordination point for GTP. A G2 region spans residues 484-488 (GITQH). The interval 505-508 (DTPG) is G3. Residues 505 to 509 (DTPGH) and 559 to 562 (NKVD) each bind GTP. The interval 559-562 (NKVD) is G4. Positions 595–597 (SAR) are G5.

Belongs to the TRAFAC class translation factor GTPase superfamily. Classic translation factor GTPase family. IF-2 subfamily.

The protein localises to the cytoplasm. Functionally, one of the essential components for the initiation of protein synthesis. Protects formylmethionyl-tRNA from spontaneous hydrolysis and promotes its binding to the 30S ribosomal subunits. Also involved in the hydrolysis of GTP during the formation of the 70S ribosomal complex. The polypeptide is Translation initiation factor IF-2 (Anaeromyxobacter dehalogenans (strain 2CP-1 / ATCC BAA-258)).